A 294-amino-acid chain; its full sequence is Acetylglutamate kinase (294 aa).

Residues 63-64 (GG), R85, and N188 contribute to the substrate site.

This sequence belongs to the acetylglutamate kinase family. ArgB subfamily.

Its subcellular location is the cytoplasm. It carries out the reaction N-acetyl-L-glutamate + ATP = N-acetyl-L-glutamyl 5-phosphate + ADP. Its pathway is amino-acid biosynthesis; L-arginine biosynthesis; N(2)-acetyl-L-ornithine from L-glutamate: step 2/4. Catalyzes the ATP-dependent phosphorylation of N-acetyl-L-glutamate. This chain is Acetylglutamate kinase, found in Methanococcus aeolicus (strain ATCC BAA-1280 / DSM 17508 / OCM 812 / Nankai-3).